A 459-amino-acid polypeptide reads, in one-letter code: tRNA modification GTPase MnmE (459 aa).

Positions 23, 88, and 127 each coordinate (6S)-5-formyl-5,6,7,8-tetrahydrofolate. The TrmE-type G domain occupies 223–381; that stretch reads GLNTVIVGKP…FKEVIKELFF (159 aa). Asn-233 contacts K(+). Residues 233-238, 252-258, and 277-280 each bind GTP; these read NVGKSS, TDVPGTT, and DTAG. Ser-237 contributes to the Mg(2+) binding site. K(+) contacts are provided by Thr-252, Val-254, and Thr-257. Thr-258 lines the Mg(2+) pocket. Lys-459 is a (6S)-5-formyl-5,6,7,8-tetrahydrofolate binding site.

It belongs to the TRAFAC class TrmE-Era-EngA-EngB-Septin-like GTPase superfamily. TrmE GTPase family. Homodimer. Heterotetramer of two MnmE and two MnmG subunits. K(+) serves as cofactor.

The protein resides in the cytoplasm. Functionally, exhibits a very high intrinsic GTPase hydrolysis rate. Involved in the addition of a carboxymethylaminomethyl (cmnm) group at the wobble position (U34) of certain tRNAs, forming tRNA-cmnm(5)s(2)U34. This is tRNA modification GTPase MnmE from Clostridium novyi (strain NT).